A 203-amino-acid chain; its full sequence is Small ribosomal subunit protein uS3 (203 aa).

Belongs to the universal ribosomal protein uS3 family. In terms of assembly, part of the 30S ribosomal subunit. Forms a tight complex with proteins S10 and S14.

Functionally, binds the lower part of the 30S subunit head. Binds mRNA in the 70S ribosome, positioning it for translation. In Carsonella ruddii (strain PV), this protein is Small ribosomal subunit protein uS3.